A 163-amino-acid chain; its full sequence is Peptide methionine sulfoxide reductase MsrA 1 (163 aa).

C21 is an active-site residue.

The protein belongs to the MsrA Met sulfoxide reductase family.

It catalyses the reaction L-methionyl-[protein] + [thioredoxin]-disulfide + H2O = L-methionyl-(S)-S-oxide-[protein] + [thioredoxin]-dithiol. The enzyme catalyses [thioredoxin]-disulfide + L-methionine + H2O = L-methionine (S)-S-oxide + [thioredoxin]-dithiol. Functionally, has an important function as a repair enzyme for proteins that have been inactivated by oxidation. Catalyzes the reversible oxidation-reduction of methionine sulfoxide in proteins to methionine. The polypeptide is Peptide methionine sulfoxide reductase MsrA 1 (msrA1) (Nostoc sp. (strain PCC 7120 / SAG 25.82 / UTEX 2576)).